We begin with the raw amino-acid sequence, 131 residues long: Type 3 secretion system pilotin (131 aa).

An N-terminal signal peptide occupies residues 1 to 15 (MSRIIALIISFLLVG). The N-palmitoyl cysteine moiety is linked to residue Cys16. Cys16 carries the S-diacylglycerol cysteine lipid modification.

The protein belongs to the ExsB/YscW family. As to quaternary structure, interacts with YscC/SctC.

The protein localises to the cell outer membrane. Its function is as follows. Involved in the synthesis of the type III secretion system (T3SS), also called injectisome, which is used to inject bacterial effector proteins into eukaryotic host cells. Pilot protein that is required for the proper localization of the secretin YscC/SctC in the outer membrane. Also required for efficient oligomerization of YscC/SctC and stabilization of the oligomers. This is Type 3 secretion system pilotin from Yersinia enterocolitica.